A 440-amino-acid polypeptide reads, in one-letter code: Cysteine proteinase (440 aa).

Positions 1–60 (MYSSSVVSNPNERLVNNRVENDLESSDDTLSTQAKPVSRLLTRKLLLGVVVLFFLAGVSV) are cleaved as a signal peptide. Residues 61 to 229 (VSYFLFSKYK…DEDVDLAKLT (169 aa)) constitute a propeptide, activation peptide. Residues 166–182 (VKGINRFSDLTEREFYK) are involved in processing to yield active enzymes. A glycan (N-linked (GlcNAc...) asparagine) is linked at Asn206. A disulfide bridge connects residues Cys250 and Cys291. Catalysis depends on residues Cys253, His382, and Asn404.

This sequence belongs to the peptidase C1 family.

The sequence is that of Cysteine proteinase from Theileria parva (East coast fever infection agent).